The chain runs to 116 residues: Nucleoid-associated protein EUBELI_02017 (116 aa).

Over residues 1–12 (MAKRGGFPGGMP) the composition is skewed to gly residues. A disordered region spans residues 1–42 (MAKRGGFPGGMPGNMNNLMKQAQRMQRQMEEQQAELENKEFS). Positions 13–26 (GNMNNLMKQAQRMQ) are enriched in low complexity.

Belongs to the YbaB/EbfC family. Homodimer.

Its subcellular location is the cytoplasm. It is found in the nucleoid. Its function is as follows. Binds to DNA and alters its conformation. May be involved in regulation of gene expression, nucleoid organization and DNA protection. This chain is Nucleoid-associated protein EUBELI_02017, found in Lachnospira eligens (strain ATCC 27750 / DSM 3376 / VPI C15-48 / C15-B4) (Eubacterium eligens).